The primary structure comprises 121 residues: Secretin (121 aa).

The N-terminal stretch at 1–18 (MAPRPLLLLLLLLGGSAA) is a signal peptide. Positions 19-26 (RPAPPRAR) are excised as a propeptide. Val-54 carries the valine amide modification. Ser-58 is modified (phosphoserine). A propeptide spanning residues 58–121 (SEQDAENSMA…AAAEGTLRPR (64 aa)) is cleaved from the precursor.

Belongs to the glucagon family.

Its subcellular location is the secreted. In terms of biological role, hormone involved in different processes, such as regulation of the pH of the duodenal content, food intake and water homeostasis. Exerts its biological effects by binding to secretin receptor (SCTR), a G-protein coupled receptor expressed in the basolateral domain of several cells. Acts as a key gastrointestinal hormone by regulating the pH of the duodenal content. Secreted by S cells of the duodenum in the crypts of Lieberkuehn and regulates the pH of the duodenum by (1) inhibiting the secretion of gastric acid from the parietal cells of the stomach and (2) stimulating the production of bicarbonate (NaHCO(3)) from the ductal cells of the pancreas. Production of bicarbonate is essential to neutralize the pH and ensure no damage is done to the small intestine by the gastric acid. In addition to regulating the pH of the duodenal content, plays a central role in diet induced thermogenesis: acts as a non-sympathetic brown fat (BAT) activator mediating prandial thermogenesis, which consequentially induces satiation. Mechanistically, secretin released by the gut after a meal binds to secretin receptor (SCTR) in brown adipocytes, activating brown fat thermogenesis by stimulating lipolysis, which is sensed in the brain and promotes satiation. Also able to stimulate lipolysis in white adipocytes. Also plays an important role in cellular osmoregulation: released into the systemic circulation in response to hyperosmolality and acts at different levels in the hypothalamus, pituitary and kidney to regulate water homeostasis. Also plays a role in the central nervous system, possibly by acting as a neuropeptide hormone: required for hippocampal synaptic function and neural progenitor cells maintenance. The chain is Secretin from Homo sapiens (Human).